The chain runs to 343 residues: D-alanine--D-alanine ligase (343 aa).

One can recognise an ATP-grasp domain in the interval 132–337; the sequence is KNLFSYHKIP…YPDLIDKLIE (206 aa). ATP is bound at residue 165–220; the sequence is DRFLGWPCFVKPANMGSSIGVSKVHSPGEVKKALEKGFYYDRKLIFEEFVEGREIE. Mg(2+)-binding residues include Asp291, Glu304, and Asn306.

Belongs to the D-alanine--D-alanine ligase family. Mg(2+) is required as a cofactor. The cofactor is Mn(2+).

The protein resides in the cytoplasm. The enzyme catalyses 2 D-alanine + ATP = D-alanyl-D-alanine + ADP + phosphate + H(+). It participates in cell wall biogenesis; peptidoglycan biosynthesis. In terms of biological role, cell wall formation. This chain is D-alanine--D-alanine ligase, found in Halothermothrix orenii (strain H 168 / OCM 544 / DSM 9562).